Here is a 671-residue protein sequence, read N- to C-terminus: DNA ligase (671 aa).

Residues 31–35 (DAEYD), 80–81 (SL), and Glu110 each bind NAD(+). Lys112 functions as the N6-AMP-lysine intermediate in the catalytic mechanism. 4 residues coordinate NAD(+): Arg133, Glu167, Lys283, and Lys307. Zn(2+) is bound by residues Cys401, Cys404, Cys419, and Cys424. Residues 587 to 671 (EEELVFAGKT…YLPDEGGLNE (85 aa)) enclose the BRCT domain.

This sequence belongs to the NAD-dependent DNA ligase family. LigA subfamily. Requires Mg(2+) as cofactor. It depends on Mn(2+) as a cofactor.

The catalysed reaction is NAD(+) + (deoxyribonucleotide)n-3'-hydroxyl + 5'-phospho-(deoxyribonucleotide)m = (deoxyribonucleotide)n+m + AMP + beta-nicotinamide D-nucleotide.. In terms of biological role, DNA ligase that catalyzes the formation of phosphodiester linkages between 5'-phosphoryl and 3'-hydroxyl groups in double-stranded DNA using NAD as a coenzyme and as the energy source for the reaction. It is essential for DNA replication and repair of damaged DNA. This is DNA ligase from Listeria monocytogenes serotype 4a (strain HCC23).